We begin with the raw amino-acid sequence, 286 residues long: Light-independent protochlorophyllide reductase iron-sulfur ATP-binding protein (286 aa).

Residues 10-15 (GIGKST) and Lys39 each bind ATP. Ser14 contacts Mg(2+). Cys95 and Cys129 together coordinate [4Fe-4S] cluster. 180 to 181 (NR) serves as a coordination point for ATP.

The protein belongs to the NifH/BchL/ChlL family. In terms of assembly, homodimer. Protochlorophyllide reductase is composed of three subunits; ChlL, ChlN and ChlB. [4Fe-4S] cluster is required as a cofactor.

It carries out the reaction chlorophyllide a + oxidized 2[4Fe-4S]-[ferredoxin] + 2 ADP + 2 phosphate = protochlorophyllide a + reduced 2[4Fe-4S]-[ferredoxin] + 2 ATP + 2 H2O. The protein operates within porphyrin-containing compound metabolism; chlorophyll biosynthesis (light-independent). In terms of biological role, component of the dark-operative protochlorophyllide reductase (DPOR) that uses Mg-ATP and reduced ferredoxin to reduce ring D of protochlorophyllide (Pchlide) to form chlorophyllide a (Chlide). This reaction is light-independent. The L component serves as a unique electron donor to the NB-component of the complex, and binds Mg-ATP. The polypeptide is Light-independent protochlorophyllide reductase iron-sulfur ATP-binding protein (Cyanothece sp. (strain PCC 7425 / ATCC 29141)).